The following is a 147-amino-acid chain: UPF0306 protein YhbP (147 aa).

This sequence belongs to the UPF0306 family.

The polypeptide is UPF0306 protein YhbP (Salmonella arizonae (strain ATCC BAA-731 / CDC346-86 / RSK2980)).